Reading from the N-terminus, the 282-residue chain is Peptidoglycan-recognition protein LD (282 aa).

Residues 1–29 form a disordered region; it reads MDSSHIAVRVARRSPSPAAVSQSSYGSLG. Residues 1-88 are Cytoplasmic-facing; sequence MDSSHIAVRV…RRNPTLHEDC (88 aa). A helical membrane pass occupies residues 89–111; sequence FNWRSVGLLVMCASALALAAYLL. The Extracellular portion of the chain corresponds to 112 to 282; sequence WRQTQTPDFG…PHYASHQTSK (171 aa). Cysteines 162 and 166 form a disulfide. N-linked (GlcNAc...) asparagine glycosylation occurs at Asn222.

The protein belongs to the N-acetylmuramoyl-L-alanine amidase 2 family. In terms of tissue distribution, expressed in uninduced hemocytes and mbn-2 cells.

It localises to the cell membrane. Peptidoglycan-recognition protein probably involved in innate immunity by binding to peptidoglycans (PGN) of bacteria and activating the immune response. The polypeptide is Peptidoglycan-recognition protein LD (PGRP-LD) (Drosophila melanogaster (Fruit fly)).